The chain runs to 71 residues: Vitellogenin-A1 (71 aa).

The first 15 residues, 1–15 (MRGIILALLLAIAGS), serve as a signal peptide directing secretion. The 48-residue stretch at 24–71 (FSESKTSVYNYEAVILNGFPESGLSRAGIKINCKVEISAYAQRSYFLK) folds into the Vitellogenin domain.

In terms of tissue distribution, produced by the liver, secreted into the blood and then sequestered by receptor mediated endocytosis into growing oocytes, where it is generally cleaved, giving rise to the respective yolk components.

Functionally, precursor of the major egg-yolk proteins that are sources of nutrients during early development of oviparous organisms. The polypeptide is Vitellogenin-A1 (Xenopus laevis (African clawed frog)).